The chain runs to 286 residues: Protein METABOLIC NETWORK MODULATOR 1 (286 aa).

Positions 1–10 (MEKESHEENN) are enriched in basic and acidic residues. Disordered stretches follow at residues 1–60 (MEKE…DDEA), 123–146 (VMHH…GSGV), and 181–204 (GGER…SGAS). The span at 20–29 (KRKRGRPRKQ) shows a compositional bias: basic residues. Basic and acidic residues predominate over residues 30-39 (LKLESNEHSL). The segment covering 131–140 (KRGRKSRFRE) has biased composition (basic residues). The segment covering 191-204 (PMQTETGSQASGAS) has biased composition (polar residues).

As to expression, mailny observed in young seedlings and in emerging leaves.

Functionally, lineage-specific modulator of primary metabolism. Influences flowering time. The sequence is that of Protein METABOLIC NETWORK MODULATOR 1 from Arabidopsis thaliana (Mouse-ear cress).